Reading from the N-terminus, the 89-residue chain is Cytochrome b (89 aa).

The next 2 helical transmembrane spans lie at 38 to 58 (FGPL…FLAM) and 82 to 89 (WLLRYMHA). H88 contacts heme b.

This sequence belongs to the cytochrome b family. As to quaternary structure, the main subunits of complex b-c1 are: cytochrome b, cytochrome c1 and the Rieske protein. Heme b serves as cofactor.

It is found in the mitochondrion inner membrane. Its function is as follows. Component of the ubiquinol-cytochrome c reductase complex (complex III or cytochrome b-c1 complex) that is part of the mitochondrial respiratory chain. The b-c1 complex mediates electron transfer from ubiquinol to cytochrome c. Contributes to the generation of a proton gradient across the mitochondrial membrane that is then used for ATP synthesis. The chain is Cytochrome b (MT-CYB) from Brassica napus (Rape).